The chain runs to 314 residues: Ketimine reductase mu-crystallin (314 aa).

Position 47 (Arg-47) interacts with 3,3',5-triiodo-L-thyronine. NADPH is bound by residues Ser-91, His-92, Arg-119, Ala-144, Val-146, Gln-147, Asn-168, Arg-169, Thr-170, Asn-173, Thr-205, Met-206, and Val-226. Position 257 (Glu-257) interacts with 3,3',5-triiodo-L-thyronine. Ser-292 is an NADPH binding site.

The protein belongs to the ornithine cyclodeaminase/mu-crystallin family. In terms of assembly, homodimer. Binds the thyroid hormone triiodothyronine (T3); T3 binding inhibits enzymatic activity. As to expression, expressed at high abundance in lens, but outside the lens it is preferentially expressed in neural tissues, retina and brain.

The protein localises to the cytoplasm. The catalysed reaction is L-pipecolate + NADP(+) = Delta(1)-piperideine-2-carboxylate + NADPH + H(+). It carries out the reaction L-pipecolate + NAD(+) = Delta(1)-piperideine-2-carboxylate + NADH + H(+). The enzyme catalyses L-proline + NADP(+) = 1-pyrroline-2-carboxylate + NADPH + H(+). It catalyses the reaction L-proline + NAD(+) = 1-pyrroline-2-carboxylate + NADH + H(+). The catalysed reaction is (3R)-1,4-thiomorpholine-3-carboxylate + NAD(+) = 3,4-dehydrothiomorpholine-3-carboxylate + NADH + 2 H(+). It carries out the reaction (3R)-1,4-thiomorpholine-3-carboxylate + NADP(+) = 3,4-dehydrothiomorpholine-3-carboxylate + NADPH + 2 H(+). The enzyme catalyses (S)-cystathionine ketimine + NADH + 2 H(+) = (3R,5S)-2,3,5,6,7-pentahydro-1,4-thiazepine-3,5-dicarboxylate + NAD(+). It catalyses the reaction (S)-cystathionine ketimine + NADPH + 2 H(+) = (3R,5S)-2,3,5,6,7-pentahydro-1,4-thiazepine-3,5-dicarboxylate + NADP(+). The catalysed reaction is (R)-lanthionine ketimine + NADPH + 2 H(+) = (3R,5R)-1,4-thiomorpholine-3,5-dicarboxylate + NADP(+). It carries out the reaction Delta(2)-thiazoline-2-carboxylate + NADPH + 2 H(+) = L-thiazolidine-2-carboxylate + NADP(+). Catalyzes the NAD(P)H-dependent reduction of imine double bonds of a number of cyclic ketimine substrates, including sulfur-containing cyclic ketimines. Under physiological conditions, it efficiently catalyzes delta(1)-piperideine-2-carboxylate (P2C) and delta(1)-pyrroline-2-carboxylate (Pyr2C) reduction, suggesting a central role in lysine and glutamate metabolism. Additional substrates are delta(2)-thiazoline-2-carboxylate (T2C), 3,4-dehydrothiomorpholine-3-carboxylate (AECK), and (R)-lanthionine ketimine (LK) that is reduced at very low rate compared to other substrates. Also catalyzes the NAD(P)H-dependent reduction of (S)-cystathionine ketimine (CysK). The protein is Ketimine reductase mu-crystallin (CRYM) of Macropus fuliginosus (Western gray kangaroo).